Reading from the N-terminus, the 128-residue chain is Large ribosomal subunit protein eL22 (128 aa).

Phosphothreonine is present on Thr-62. Phosphoserine is present on Ser-66. Position 69 is an N6-succinyllysine (Lys-69).

It belongs to the eukaryotic ribosomal protein eL22 family. In terms of assembly, component of the large ribosomal subunit.

It is found in the cytoplasm. Its function is as follows. Component of the large ribosomal subunit. The ribosome is a large ribonucleoprotein complex responsible for the synthesis of proteins in the cell. This Rattus norvegicus (Rat) protein is Large ribosomal subunit protein eL22 (Rpl22).